The sequence spans 359 residues: 4-hydroxy-3-methylbut-2-en-1-yl diphosphate synthase (flavodoxin) (359 aa).

Residues Cys-264, Cys-267, Cys-299, and Glu-306 each coordinate [4Fe-4S] cluster.

It belongs to the IspG family. [4Fe-4S] cluster serves as cofactor.

The enzyme catalyses (2E)-4-hydroxy-3-methylbut-2-enyl diphosphate + oxidized [flavodoxin] + H2O + 2 H(+) = 2-C-methyl-D-erythritol 2,4-cyclic diphosphate + reduced [flavodoxin]. Its pathway is isoprenoid biosynthesis; isopentenyl diphosphate biosynthesis via DXP pathway; isopentenyl diphosphate from 1-deoxy-D-xylulose 5-phosphate: step 5/6. In terms of biological role, converts 2C-methyl-D-erythritol 2,4-cyclodiphosphate (ME-2,4cPP) into 1-hydroxy-2-methyl-2-(E)-butenyl 4-diphosphate. The protein is 4-hydroxy-3-methylbut-2-en-1-yl diphosphate synthase (flavodoxin) of Mycoplasmoides gallisepticum (strain R(low / passage 15 / clone 2)) (Mycoplasma gallisepticum).